We begin with the raw amino-acid sequence, 268 residues long: MERYQQLFKQLAAKKEGAFVPFVQLGDPSPAMSLNIIDTLIAAGADALELGIPFSDPLADGPTIQNAALRAFAAGVTPAICFEILAEIRQKHPTIPIGLLMYANLVFHNGIDHFYQRCAEVGVDSVLIADVPFEESAPFRAAALRHGIAPIFICPPNADDDLLREIASHGRGYTYLLSRAGVTGAENHGQLPLNHLVDKLREYNAAPALQGFGISEPAQVKASLAAGAAGAISGSAIVKIIEKNVAQPVEMLVQLTRFVTEMKAATRS.

Active-site proton acceptor residues include Glu49 and Asp60.

Belongs to the TrpA family. As to quaternary structure, tetramer of two alpha and two beta chains.

It carries out the reaction (1S,2R)-1-C-(indol-3-yl)glycerol 3-phosphate + L-serine = D-glyceraldehyde 3-phosphate + L-tryptophan + H2O. It functions in the pathway amino-acid biosynthesis; L-tryptophan biosynthesis; L-tryptophan from chorismate: step 5/5. Functionally, the alpha subunit is responsible for the aldol cleavage of indoleglycerol phosphate to indole and glyceraldehyde 3-phosphate. This is Tryptophan synthase alpha chain from Yersinia pseudotuberculosis serotype O:1b (strain IP 31758).